The chain runs to 122 residues: Large ribosomal subunit protein uL18 (122 aa).

A compositionally biased stretch (basic residues) spans 1 to 21 (MSKLSRKQQTQKRHRRLRRHL). A disordered region spans residues 1–26 (MSKLSRKQQTQKRHRRLRRHLTGTSD).

Belongs to the universal ribosomal protein uL18 family. Part of the 50S ribosomal subunit; part of the 5S rRNA/L5/L18/L25 subcomplex. Contacts the 5S and 23S rRNAs.

Functionally, this is one of the proteins that bind and probably mediate the attachment of the 5S RNA into the large ribosomal subunit, where it forms part of the central protuberance. The polypeptide is Large ribosomal subunit protein uL18 (Parasynechococcus marenigrum (strain WH8102)).